Here is a 152-residue protein sequence, read N- to C-terminus: Plant UBX domain-containing protein 12 (152 aa).

Residues 32–61 (KRFSEEESEETENTTNSSNAVFGFPNLPEE) are disordered. The region spanning 67-150 (DQSVLCRICV…GLANSLVSVT (84 aa)) is the UBX domain.

This chain is Plant UBX domain-containing protein 12, found in Arabidopsis thaliana (Mouse-ear cress).